A 916-amino-acid chain; its full sequence is Translation initiation factor IF-2 (916 aa).

Basic and acidic residues predominate over residues 151-191; the sequence is NLDEQQRLAESDRARDEAIQRKRDEEQAAKDRVEAERKAAE. 2 disordered regions span residues 151–262 and 280–328; these read NLDE…SHVM and HLSA…ERPT. 2 stretches are compositionally biased toward low complexity: residues 192 to 243 and 293 to 305; these read EAAA…ATPA and RGKP…SSSS. Residues 415–584 form the tr-type G domain; the sequence is SRPPVVTIMG…SLQAEVLELK (170 aa). The segment at 424-431 is G1; the sequence is GHVDHGKT. 424-431 serves as a coordination point for GTP; the sequence is GHVDHGKT. A G2 region spans residues 449-453; sequence GITQH. Residues 470–473 form a G3 region; sequence DTPG. Residues 470–474 and 524–527 each bind GTP; these read DTPGH and NKID. The segment at 524 to 527 is G4; that stretch reads NKID. The segment at 560–562 is G5; sequence SAK.

It belongs to the TRAFAC class translation factor GTPase superfamily. Classic translation factor GTPase family. IF-2 subfamily.

The protein resides in the cytoplasm. In terms of biological role, one of the essential components for the initiation of protein synthesis. Protects formylmethionyl-tRNA from spontaneous hydrolysis and promotes its binding to the 30S ribosomal subunits. Also involved in the hydrolysis of GTP during the formation of the 70S ribosomal complex. The sequence is that of Translation initiation factor IF-2 from Xanthomonas campestris pv. campestris (strain ATCC 33913 / DSM 3586 / NCPPB 528 / LMG 568 / P 25).